Here is a 321-residue protein sequence, read N- to C-terminus: Glycerol-3-phosphate dehydrogenase [NAD(P)+] (321 aa).

NADPH-binding residues include Ser-10, Trp-11, Arg-31, Arg-32, Tyr-47, and Lys-98. Lys-98, Gly-125, and Ser-127 together coordinate sn-glycerol 3-phosphate. Ala-129 serves as a coordination point for NADPH. 5 residues coordinate sn-glycerol 3-phosphate: Lys-177, Asp-230, Ser-240, Arg-241, and Asn-242. The active-site Proton acceptor is the Lys-177. Arg-241 provides a ligand contact to NADPH. NADPH contacts are provided by Val-265 and Glu-267.

The protein belongs to the NAD-dependent glycerol-3-phosphate dehydrogenase family.

It is found in the cytoplasm. It catalyses the reaction sn-glycerol 3-phosphate + NAD(+) = dihydroxyacetone phosphate + NADH + H(+). The enzyme catalyses sn-glycerol 3-phosphate + NADP(+) = dihydroxyacetone phosphate + NADPH + H(+). It functions in the pathway membrane lipid metabolism; glycerophospholipid metabolism. Functionally, catalyzes the reduction of the glycolytic intermediate dihydroxyacetone phosphate (DHAP) to sn-glycerol 3-phosphate (G3P), the key precursor for phospholipid synthesis. This chain is Glycerol-3-phosphate dehydrogenase [NAD(P)+], found in Thermotoga sp. (strain RQ2).